The chain runs to 219 residues: Transmembrane emp24 domain-containing protein 10 (219 aa).

Positions Met1 to Gly31 are cleaved as a signal peptide. A required for interaction with STX17 region spans residues Met1 to Glu142. The Lumenal segment spans residues Ile32–Arg185. A GOLD domain is found at Arg41–Ser193. Positions Leu147 to Thr178 are required for TMED10 and TMED2 cis-Golgi network localization. Residues Arg171 and Arg176 each carry the dimethylated arginine modification. A glycan (N-linked (GlcNAc...) asparagine) is linked at Asn179. A helical membrane pass occupies residues Val186–Phe206. Positions Gln204 to Glu219 are interaction with COPG1. Topologically, residues Tyr207–Glu219 are cytoplasmic. The interval Tyr207–Glu219 is interaction with ARF1 and IL1B. Positions Phe211 to Phe212 match the COPII vesicle coat-binding motif. A COPI vesicle coat-binding motif is present at residues Phe211–Glu219.

Belongs to the EMP24/GP25L family. Predominantly dimeric and to a lesser extent monomeric in the ER. Monomer and dimer in ERGIC and cis-Golgi network. Forms homooligomer (via GOLD domain); the assembly is promoted by direct binding with leaderless cargos and may form a protein channel that facilitates cargo entry into the ERGIC. Forms heterooligomeric complexes with other members of the p24 family such as TMED2, TMED7 and TMED9. Interacts (via GOLD domain) with TMED2 (via GOLD domain); the complex is required for export of TMED10 from the ER to the cis-Golgi network; the complex is proposed to be involved in cis-Golgi network dynamics and / or biogenesis. Associates with the COPI vesicle coat subunits (coatomer). Tetramerization of the cytoplasmic domain at the Golgi membrane in vitro; the complex is proposed to interact with COPI coatomer and induce budding of the vesicles. Interacts with COPG1; the interaction involves TMED10 homodimer. Interacts with ARF1 (GDP-bound); the interaction probably involves a TMED10 oligomer. Interacts with SEC23A, SEC24B, SEC24C and SEC24D components of the coat protein complex II/COPII, indicative of an association of TMED10 with the COPII vesicle coat. Interacts with CD59. Interacts with MPPE1/PGAP5; the complex might recruit and sort GPI-anchored proteins to the ER-exit site, or the interaction might lead to recycling of PGAP5 between the ER and the Golgi. Interacts with F2LR1/PAR2. Interacts with KDELR2/ERD2; the interaction is disrupted by KDELR2 ligand. Found in a complex composed at least of SURF4, TMED2 and TMED10. Associates with the presenilin-dependent gamma-secretase complex. Interacts with STX17; the interaction is direct. Interacts with IL-1; the interaction is direct. Interacts with RAB21 (active GTP-bound form); the interaction is indirect and regulates TMED10 abundance and localization at the Golgi. Ubiquitous.

The protein localises to the endoplasmic reticulum membrane. The protein resides in the endoplasmic reticulum-Golgi intermediate compartment membrane. Its subcellular location is the golgi apparatus membrane. It is found in the golgi apparatus. It localises to the cis-Golgi network membrane. The protein localises to the trans-Golgi network membrane. The protein resides in the cytoplasmic vesicle. Its subcellular location is the secretory vesicle membrane. It is found in the cell membrane. It localises to the melanosome. In terms of biological role, cargo receptor involved in protein vesicular trafficking and quality control in the endoplasmic reticulum (ER) and Golgi. The p24 protein family is a group of transmembrane proteins that bind coat protein complex I/COPI and coat protein complex II/COPII involved in vesicular trafficking between the membranes. Acts at the lumenal side for incorporation of secretory cargo molecules into transport vesicles and involved in vesicle coat formation at the cytoplasmic side. Mainly functions in the early secretory pathway and cycles between the ER, ER-Golgi intermediate compartment (ERGIC) and Golgi, mediating cargo transport through COPI and COPII-coated vesicles. In COPII vesicle-mediated anterograde transport, involved in the transport of GPI-anchored proteins by acting together with TMED2 as their cargo receptor; the function specifically implies SEC24C and SEC24D of the COPII vesicle coat and lipid raft-like microdomains of the ER. Recognizes GPI anchors structural remodeled in the ER by the GPI inositol-deacylase/PGAP1 and the metallophosphoesterase MPPE1/PGAP5. In COPI vesicle-mediated retrograde transport, involved in the biogenesis of COPI vesicles and vesicle coat recruitment. Involved in trafficking of amyloid beta A4 protein and soluble APP-beta release (independent from the modulation of gamma-secretase activity). Involved in the KDELR2-mediated retrograde transport of the toxin A subunit (CTX-A-K63)together with COPI and the COOH terminus of KDELR2. On Golgi membranes, acts as a primary receptor for ARF1-GDP, a GTP-binding protein involved in COPI-vesicle formation. Increases coatomer-dependent GTPase-activating activity of ARFGAP2 which mediates the hydrolysis of ARF1-bound GTP and therefore modulates protein trafficking from the Golgi apparatus. Involved in the exocytic trafficking of G protein-coupled receptors F2LR1/PAR2 (trypsin and tryspin-like enzyme receptor), OPRM1 (opioid receptor) and P2RY4 (UTD and UDP receptor) from the Golgi to the plasma membrane, thus contributing to receptor resensitization. In addition to its cargo receptor activity, may also act as a protein channel after oligomerization, facilitating the post-translational entry of leaderless cytoplasmic cargo into the ERGIC. Involved in the translocation into ERGIC, the vesicle entry and the secretion of leaderless cargos (lacking the secretion signal sequence), including the mature form of interleukin 1/IL-1 family members, the alpha-crystallin B chain HSPB5, the carbohydrate-binding proteins galectin-1/LGALS1 and galectin-3/LGALS3, the microtubule-associated protein Tau/MAPT, and the annexin A1/ANXA1; the translocation process is dependent on cargo protein unfolding and enhanced by chaperones HSP90AB1 and HSP90B1/GRP9. Could also associates with the presenilin-dependent gamma-secretase complex in order to regulate gamma-cleavages of the amyloid beta A4 protein to yield amyloid-beta 40/Abeta40. This Rattus norvegicus (Rat) protein is Transmembrane emp24 domain-containing protein 10.